Reading from the N-terminus, the 147-residue chain is Immunity protein YxxD (147 aa).

Probably interacts with cognate toxin YxiD but not with other non-cognate toxins. The interaction inhibits the toxic activity of YxiD.

The protein resides in the cytoplasm. Functionally, immunity component of one of 6 LXG toxin-immunity modules in this strain. They promote kin selection, mediate competition in biofilms, and drive spatial segregation of different strains, indicating that LXG toxins may help avoid warfare between strains in biofilms. Mediates intercellular competition during biofilm formation; disruption of the operon disadvantages the bacteria, but overexpression of the cognate immunity protein restores growth in competition with wild-type. In situ neutralizes the toxic effect of cognate toxin YxiD. Neutralizes the toxic activity of cognate toxin YxiD upon expression in E.coli. Does not have immunity protein activity on other LXG toxins. The sequence is that of Immunity protein YxxD (yxxD) from Bacillus subtilis (strain 168).